Reading from the N-terminus, the 115-residue chain is Promotilin (115 aa).

A signal peptide spans 1 to 25; it reads MVSRKAVAALLVVHAPAMLASQTEA. The segment at 40–74 is disordered; that stretch reads EKERSKGQKKSLSVWQRSGEEGPVDPAEPIEEEGN.

It belongs to the motilin family.

It localises to the secreted. In terms of biological role, plays an important role in the regulation of interdigestive gastrointestinal motility and indirectly causes rhythmic contraction of duodenal and colonic smooth muscle. The protein is Promotilin (MLN) of Macaca mulatta (Rhesus macaque).